The following is a 452-amino-acid chain: Selenide, water dikinase 2 (452 aa).

Ala2 is modified (N-acetylalanine). Ser49 carries the phosphoserine modification. Sec63 is an active-site residue. Residue Sec63 is a non-standard amino acid, selenocysteine. An ATP-binding site is contributed by Lys66. A disordered region spans residues 86–111 (PPLTSGLVGGQEETVQEGGLSTRPGP). Over residues 95–105 (GQEETVQEGGL) the composition is skewed to low complexity. ATP is bound by residues 121 to 123 (GMD), Asp141, Asp164, and 215 to 218 (GGQT). Residue Asp123 participates in Mg(2+) binding. Asp164 is a binding site for Mg(2+). Asp319 lines the Mg(2+) pocket.

It belongs to the selenophosphate synthase 1 family. Class I subfamily. In terms of assembly, homodimer. Mg(2+) is required as a cofactor. Truncated SEPHS2 proteins produced by failed UGA/Sec decoding are ubiquitinated by the CRL2(KLHDC3) complex, which recognizes the glycine (Gly) at the C-terminus of truncated SEPHS2 proteins.

It carries out the reaction hydrogenselenide + ATP + H2O = selenophosphate + AMP + phosphate + 2 H(+). Functionally, synthesizes selenophosphate from selenide and ATP. In Mus musculus (Mouse), this protein is Selenide, water dikinase 2 (Sephs2).